The following is a 231-amino-acid chain: Trypsin (231 aa).

The propeptide at 1–8 (FPTDDDDK) is activation peptide. Residues 9 to 229 (IVGGYTCAAN…YVNWIQQTIA (221 aa)) enclose the Peptidase S1 domain. 6 disulfide bridges follow: Cys15–Cys145, Cys33–Cys49, Cys117–Cys218, Cys124–Cys191, Cys156–Cys170, and Cys181–Cys205. His48 functions as the Charge relay system in the catalytic mechanism. Residues Glu60, Asn62, Val65, and Glu70 each coordinate Ca(2+). Catalysis depends on Asp92, which acts as the Charge relay system. The Charge relay system role is filled by Ser185.

Belongs to the peptidase S1 family. The cofactor is Ca(2+).

The protein localises to the secreted. The protein resides in the extracellular space. It catalyses the reaction Preferential cleavage: Arg-|-Xaa, Lys-|-Xaa.. The chain is Trypsin from Sus scrofa (Pig).